A 216-amino-acid chain; its full sequence is Transmembrane emp24 domain-containing protein eca (216 aa).

The signal sequence occupies residues 1 to 20 (MRDQFISLALMLCILHSACG). The Lumenal segment spans residues 21 to 182 (LYFHISETER…FRHTSESTNS (162 aa)). The GOLD domain maps to 30-126 (RKCFIEEVPD…QLRVHLDIQV (97 aa)). Positions 134-164 (ANVAQKEKLTELQLRIRQLLDQVEQITKEQN) form a coiled coil. Residues 183–203 (RVLWWSLAQTVVLVCMGFWQM) traverse the membrane as a helical segment. Topologically, residues 204–216 (RHLKSFFEAKKLV) are cytoplasmic. A Prevents secretion from ER motif is present at residues 213–216 (KKLV).

It belongs to the EMP24/GP25L family.

The protein localises to the endoplasmic reticulum membrane. Its function is as follows. Eca and bai are essential, though not redundant, for dorsoventral patterning of the embryo. Specifically required during early embryogenesis for the activity of maternal tkv, while the zygotic tkv is not affected. Involved in Golgi organization. The chain is Transmembrane emp24 domain-containing protein eca from Drosophila erecta (Fruit fly).